A 386-amino-acid polypeptide reads, in one-letter code: MVEEFKVTPWEVEGVVDYDKLIKHFGTSPLTEDLLEKTAELTKSELPIFFRRKFFFSHRDYDLILKDYEEGRGFFLYTGRGPSGPMHIGHIIPFFATKWLQEKFGVNLYIQITDDEKFLFKENLTFDDTKRWAYDNILDIIAVGFDPDKTFIFQNSEFTKIYEMAIPIAKKINFSMAKAVFGFTEQSKIGMIFFPAIQIAPTFFERKRCLIPAAIDQDPYWRLQRDFAESLGYYKTAALHSKFVPSLTSLSGKMSASKPETAIYLTDSPEDVEKKVWKFTLTGGRPTLKEQREKGGEPEKCVVFKWLEIFFEEDDKKLKERYYACKNGELTCGECKRYLISKIQEFLKEHQRRRKKAEKLVEKFKYTGKLAQEMWNEAIPEPLKRS.

The short motif at 82–90 (PSGPMHIGH) is the 'HIGH' region element. The 'KMSKS' region motif lies at 253 to 257 (KMSAS).

Belongs to the class-I aminoacyl-tRNA synthetase family.

It is found in the cytoplasm. The enzyme catalyses tRNA(Trp) + L-tryptophan + ATP = L-tryptophyl-tRNA(Trp) + AMP + diphosphate + H(+). This chain is Tryptophan--tRNA ligase, found in Pyrococcus horikoshii (strain ATCC 700860 / DSM 12428 / JCM 9974 / NBRC 100139 / OT-3).